A 431-amino-acid chain; its full sequence is 23S rRNA (uracil(1939)-C(5))-methyltransferase RlmD (431 aa).

Residues 10-68 (RVTTRQIITVKVNDLDSFGQGVARHNGKALFIPGLLPEESAEVIITEDKKQFARARVSR) form the TRAM domain. Positions 81, 87, 90, and 161 each coordinate [4Fe-4S] cluster. Positions 264, 293, 298, 314, 341, and 362 each coordinate S-adenosyl-L-methionine. C388 functions as the Nucleophile in the catalytic mechanism.

Belongs to the class I-like SAM-binding methyltransferase superfamily. RNA M5U methyltransferase family. RlmD subfamily.

The catalysed reaction is uridine(1939) in 23S rRNA + S-adenosyl-L-methionine = 5-methyluridine(1939) in 23S rRNA + S-adenosyl-L-homocysteine + H(+). Catalyzes the formation of 5-methyl-uridine at position 1939 (m5U1939) in 23S rRNA. This chain is 23S rRNA (uracil(1939)-C(5))-methyltransferase RlmD, found in Salmonella choleraesuis (strain SC-B67).